Reading from the N-terminus, the 232-residue chain is GTP cyclohydrolase III (232 aa).

This sequence belongs to the archaeal-type GTP cyclohydrolase family.

It catalyses the reaction GTP + 3 H2O = 2-amino-5-formylamino-6-(5-phospho-D-ribosylamino)pyrimidin-4(3H)-one + 2 phosphate + 2 H(+). Functionally, catalyzes the formation of 2-amino-5-formylamino-6-ribofuranosylamino-4(3H)-pyrimidinone ribonucleotide monophosphate and inorganic phosphate from GTP. Also has an independent pyrophosphate phosphohydrolase activity. The chain is GTP cyclohydrolase III from Saccharolobus islandicus (strain Y.N.15.51 / Yellowstone #2) (Sulfolobus islandicus).